A 299-amino-acid polypeptide reads, in one-letter code: Coenzyme PQQ synthesis protein B (299 aa).

The protein belongs to the PqqB family.

It functions in the pathway cofactor biosynthesis; pyrroloquinoline quinone biosynthesis. Its function is as follows. May be involved in the transport of PQQ or its precursor to the periplasm. The protein is Coenzyme PQQ synthesis protein B of Methylobacterium sp. (strain 4-46).